Consider the following 306-residue polypeptide: Homoserine kinase (306 aa).

Residue 95-105 coordinates ATP; sequence PHSRGLGSSAA.

This sequence belongs to the GHMP kinase family. Homoserine kinase subfamily.

Its subcellular location is the cytoplasm. The catalysed reaction is L-homoserine + ATP = O-phospho-L-homoserine + ADP + H(+). Its pathway is amino-acid biosynthesis; L-threonine biosynthesis; L-threonine from L-aspartate: step 4/5. Functionally, catalyzes the ATP-dependent phosphorylation of L-homoserine to L-homoserine phosphate. This is Homoserine kinase from Mycobacteroides abscessus (strain ATCC 19977 / DSM 44196 / CCUG 20993 / CIP 104536 / JCM 13569 / NCTC 13031 / TMC 1543 / L948) (Mycobacterium abscessus).